Reading from the N-terminus, the 155-residue chain is Small ribosomal subunit protein uS7 (155 aa).

It belongs to the universal ribosomal protein uS7 family. In terms of assembly, part of the 30S ribosomal subunit. Contacts proteins S9 and S11.

One of the primary rRNA binding proteins, it binds directly to 16S rRNA where it nucleates assembly of the head domain of the 30S subunit. Is located at the subunit interface close to the decoding center, probably blocks exit of the E-site tRNA. This Kosmotoga olearia (strain ATCC BAA-1733 / DSM 21960 / TBF 19.5.1) protein is Small ribosomal subunit protein uS7.